Reading from the N-terminus, the 331-residue chain is Isopenicillin N synthase (331 aa).

Isopenicillin N contacts are provided by Arg-87, Tyr-91, Ser-183, and Tyr-189. 6 residues coordinate N-[(5S)-5-amino-5-carboxypentanoyl]-L-cysteinyl-D-valine: Arg-87, Tyr-91, Ser-183, Tyr-189, His-214, and Asp-216. One can recognise a Fe2OG dioxygenase domain in the interval 181 to 288 (LSSVVLIRYP…RQSLPFFVNL (108 aa)). The Fe(2+) site is built by His-214, Asp-216, and His-270. Arg-279 lines the 2-oxoglutarate pocket. Position 281 (Ser-281) interacts with isopenicillin N. Ser-281 is a binding site for N-[(5S)-5-amino-5-carboxypentanoyl]-L-cysteinyl-D-valine.

This sequence belongs to the iron/ascorbate-dependent oxidoreductase family. It depends on Fe(2+) as a cofactor.

It is found in the cytoplasm. Its subcellular location is the cytosol. It carries out the reaction N-[(5S)-5-amino-5-carboxypentanoyl]-L-cysteinyl-D-valine + O2 = isopenicillin N + 2 H2O. It participates in antibiotic biosynthesis; penicillin G biosynthesis; penicillin G from L-alpha-aminoadipate and L-cysteine and L-valine: step 2/3. In terms of biological role, isopenicillin N synthase; part of the gene cluster that mediates the biosynthesis of penicillin, the world's most important antibiotic. The first step of the pathway is performed by the trimodular NRPS acvA that produces the tripeptide N-[(5S)-5-amino-5-carboxypentanoyl]-L-cysteinyl-D-valine (LLD-ACV or ACV) via condensation of the 3 residues L-2-aminoadipate, L-cysteine and L-valine. The precursor amino acids for penicillin biosynthesis are withdrawn from the vacuolar amino acid pool by the MFS-type transporter penV. Each of the constituent amino acids of the tripeptide acv are activated as aminoacyl-adenylates with peptide bonds formed through the participation of amino acid thioester intermediates. The tripeptide ACV is then cyclized to form isopenicillin N (IPN) by the isopenicillin N synthase ipnA that forms the beta-lactam nucleus. Finally, the alpha-aminoadipyl side chain is exchanged for phenylacetic acid by the isopenicillin N acyltransferase aatA to yield penicillin. This step occurs in the peroxisomal matrix and the penM and paaT transporters are involved in the isopenicillin N and phenylacetic acid import into the peroxisome, respectively. The chain is Isopenicillin N synthase from Penicillium rubens (strain ATCC 28089 / DSM 1075 / NRRL 1951 / Wisconsin 54-1255) (Penicillium chrysogenum).